The chain runs to 86 residues: Photosystem I reaction center subunit PsaK (86 aa).

The next 2 membrane-spanning stretches (helical) occupy residues 15–35 (SWSI…IGLG) and 57–77 (GLPE…GAII).

Belongs to the PsaG/PsaK family.

It is found in the plastid. Its subcellular location is the chloroplast thylakoid membrane. The chain is Photosystem I reaction center subunit PsaK from Gracilaria tenuistipitata var. liui (Red alga).